Here is a 107-residue protein sequence, read N- to C-terminus: U1-lycotoxin-Ls1w (107 aa).

A signal peptide spans 1 to 20 (MLKVLVVVALLVTLISYSSS). Positions 21–41 (EGIDDLEADELLSLMANEQTR) are excised as a propeptide. Intrachain disulfides connect cysteine 44–cysteine 59, cysteine 51–cysteine 68, cysteine 58–cysteine 86, and cysteine 70–cysteine 84.

Belongs to the neurotoxin 19 (CSTX) family. 04 (U1-Lctx) subfamily. In terms of tissue distribution, expressed by the venom gland.

The protein resides in the secreted. This is U1-lycotoxin-Ls1w from Lycosa singoriensis (Wolf spider).